We begin with the raw amino-acid sequence, 425 residues long: 3-isopropylmalate dehydratase large subunit (425 aa).

Cys-306, Cys-366, and Cys-369 together coordinate [4Fe-4S] cluster.

Belongs to the aconitase/IPM isomerase family. LeuC type 2 subfamily. As to quaternary structure, heterodimer of LeuC and LeuD. [4Fe-4S] cluster is required as a cofactor.

The catalysed reaction is (2R,3S)-3-isopropylmalate = (2S)-2-isopropylmalate. It participates in amino-acid biosynthesis; L-leucine biosynthesis; L-leucine from 3-methyl-2-oxobutanoate: step 2/4. Its function is as follows. Catalyzes the isomerization between 2-isopropylmalate and 3-isopropylmalate, via the formation of 2-isopropylmaleate. The sequence is that of 3-isopropylmalate dehydratase large subunit from Nautilia profundicola (strain ATCC BAA-1463 / DSM 18972 / AmH).